A 462-amino-acid chain; its full sequence is Probable peptidoglycan glycosyltransferase FtsW (462 aa).

The disordered stretch occupies residues 1-28 (MREPRHVPQLRASGRRFPQRGRRHRFGK). Residues 1–92 (MREPRHVPQL…RSRMLDFDYS (92 aa)) lie on the Cytoplasmic side of the membrane. Residues 13–27 (SGRRFPQRGRRHRFG) show a composition bias toward basic residues. Residues 93–113 (LLWVSIALLGLGVVMVYSASI) traverse the membrane as a helical segment. Residues 114–127 (AMPDSPKYASYHDY) are Periplasmic-facing. The chain crosses the membrane as a helical span at residues 128-148 (AFLLRHCVSLVVAFVAAVIAF). Over 149 to 158 (RVPVSTWDKY) the chain is Cytoplasmic. The chain crosses the membrane as a helical span at residues 159 to 179 (APHLFLIALVGLVIVLIPHIG). The Periplasmic segment spans residues 180–192 (KGVNGARRWIPLG). A helical transmembrane segment spans residues 193 to 215 (ITNMQPSEIMKLAVTIYAANYTV). Residues 216 to 223 (RKQEYMQS) lie on the Cytoplasmic side of the membrane. A helical membrane pass occupies residues 224 to 244 (FAKGFLPMAFAVGLVGALLLL). Residues 245–247 (EPD) are Periplasmic-facing. A helical transmembrane segment spans residues 248–268 (MGAFMVVAAIAMGVLFLGGVN). Residues 269 to 270 (GK) lie on the Cytoplasmic side of the membrane. The helical transmembrane segment at 271–291 (LFGGLVATAVGTFTMLVWLSP) threads the bilayer. Residues 292–349 (WRRERIFAYLDPWDERYAQGKAYQLTHSLIAFGRGEWFGVGLGGSVEKLNYLPEAHTD) lie on the Periplasmic side of the membrane. The chain crosses the membrane as a helical span at residues 350-370 (FILAVIGEELGFVGVLVVILL). At 371 to 398 (FYWIVRRSFEIGRQALALDRTFAGLMAK) the chain is on the cytoplasmic side. The helical transmembrane segment at 399-419 (GVGIWFGAQAFINMGVNLGLL) threads the bilayer. The Periplasmic segment spans residues 420 to 425 (PTKGLT). A helical membrane pass occupies residues 426 to 446 (LPLVSYGGSGILLNCISLAVL). The Cytoplasmic segment spans residues 447-462 (LRVDYENRVLMRGGKV).

The protein belongs to the SEDS family. FtsW subfamily.

It is found in the cell inner membrane. It catalyses the reaction [GlcNAc-(1-&gt;4)-Mur2Ac(oyl-L-Ala-gamma-D-Glu-L-Lys-D-Ala-D-Ala)](n)-di-trans,octa-cis-undecaprenyl diphosphate + beta-D-GlcNAc-(1-&gt;4)-Mur2Ac(oyl-L-Ala-gamma-D-Glu-L-Lys-D-Ala-D-Ala)-di-trans,octa-cis-undecaprenyl diphosphate = [GlcNAc-(1-&gt;4)-Mur2Ac(oyl-L-Ala-gamma-D-Glu-L-Lys-D-Ala-D-Ala)](n+1)-di-trans,octa-cis-undecaprenyl diphosphate + di-trans,octa-cis-undecaprenyl diphosphate + H(+). Its pathway is cell wall biogenesis; peptidoglycan biosynthesis. Peptidoglycan polymerase that is essential for cell division. In Burkholderia thailandensis (strain ATCC 700388 / DSM 13276 / CCUG 48851 / CIP 106301 / E264), this protein is Probable peptidoglycan glycosyltransferase FtsW.